The chain runs to 450 residues: Phosphoglucosamine mutase (450 aa).

The Phosphoserine intermediate role is filled by Ser-101. Mg(2+) contacts are provided by Ser-101, Asp-240, Asp-242, and Asp-244. Ser-101 is subject to Phosphoserine.

Belongs to the phosphohexose mutase family. Mg(2+) serves as cofactor. Activated by phosphorylation.

It catalyses the reaction alpha-D-glucosamine 1-phosphate = D-glucosamine 6-phosphate. In terms of biological role, catalyzes the conversion of glucosamine-6-phosphate to glucosamine-1-phosphate. This chain is Phosphoglucosamine mutase, found in Streptococcus equi subsp. zooepidemicus (strain H70).